Here is a 723-residue protein sequence, read N- to C-terminus: MNSKQHCNRCGKQVYPTDKVGPLKDSTFFHQGCFKCYICGTRLALKTYCNNRNDINDKEVYCSNHVPIAGPHDLPMASTNGSGKNLENNNHVKNGNWIDAGLSDMKIAHAMKATQVARPYPKISHEGAKYVVDYDTQTRLELLHRKDEDDLYESFQDKRVREAEEFEKENTEEWEKALAEFAKKYEKGQSNMKKDDLIRQLTIKREKKLETLHTKRKERERHQTAELVDRQAKEMLELFKASRSEYSNLQYPSTPPPPVPPSCSKREIYTTTDYFSSIDEVAIHCARNEVASFTDLIRTLSSGARSDVDVARAIYRWITIKNLNTMIFDDSIQNDTPMGLLRGIKYGTESYHVLFKRLCSYAGLHCVVIKGFSKSAGYQPGYSFDDHRFRNTWNAVFLDGSWRFVQCNWGARHLVNAKDGSHEAKTDGNLRYEYDDHYFMTDSEEFIYEFFPSDHAWQLLPRPLSLLQFERIPFVRSLFFKYNLSFIDNKLESTVYTDKSGAASISIRLPPKGDSLIFHYNLKFFDSEENTISGMSLKRFVMQSVTEDVVTFRVHAPSTRPLLLDIFANSVSSGAYLTGQPIKFKSVCKFKVVCESLQVIMVPLPECASGEWGPAKATRLFGLLPISHPDAIINTGRYVEIRFRMTRPLSEFVASLHRNRTDDRALQACTRSALKGDMVYIQIEFPGEGQYGLDIYTRQDDQLINGKQLLTHCCKYLIHSRNC.

In terms of domain architecture, LIM zinc-binding spans 5–72 (QHCNRCGKQV…SNHVPIAGPH (68 aa)).

Belongs to the transglutaminase-like superfamily. In terms of tissue distribution, expressed in the Y and U rectal epithelial cells, in marginal cells of the terminal bulb and isthmus of the pharynx (at protein level).

Its subcellular location is the cytoplasm. It is found in the cytoskeleton. Its function is as follows. Cytoskeleton-associated protein. May play a role in hypodermal cell development. In Caenorhabditis elegans, this protein is Lim and transglutaminase domain protein ltd-1.